A 1091-amino-acid polypeptide reads, in one-letter code: ATPase family AAA domain-containing protein 2 (1091 aa).

The tract at residues 32 to 211 is disordered; sequence LEDLGVFNET…HFERRRKRSR (180 aa). Positions 53–62 are enriched in basic and acidic residues; sequence KQKDIQRTDE. Over residues 74-119 the composition is skewed to acidic residues; it reads SSEEGEDQEHEDDGEDEDDEDEDDDDDDDDDDDDDEDDEDEEDGEE. Residue K148 forms a Glycyl lysine isopeptide (Lys-Gly) (interchain with G-Cter in SUMO2) linkage. 4 positions are modified to phosphoserine: S158, S168, S173, and S241. 298 to 305 is an ATP binding site; that stretch reads GPPGTGKT. S577 and S582 each carry phosphoserine. 2 coiled-coil regions span residues 801–825 and 917–943; these read LTAE…IFLR and YAII…KKRG. One can recognise a Bromo domain in the interval 811 to 923; sequence EQEEDTFREL…DTAYAIIKEE (113 aa). K959 is covalently cross-linked (Glycyl lysine isopeptide (Lys-Gly) (interchain with G-Cter in SUMO2)). Residues 961-985 are disordered; it reads NSTLVGDKRSDPEQNEKLKTPSTPV. Basic and acidic residues predominate over residues 966–979; sequence GDKRSDPEQNEKLK. S970 carries the phosphoserine modification. K979 is covalently cross-linked (Glycyl lysine isopeptide (Lys-Gly) (interchain with G-Cter in SUMO2)). A phosphothreonine mark is found at T980 and T983. S1003 is modified (phosphoserine). T1024 carries the post-translational modification Phosphothreonine.

Belongs to the AAA ATPase family. As to quaternary structure, interaction with ESR1 and NCOA3 is enhanced by estradiol. Interacts with acetylated lysine residues on histone H1.4, H2A, H2B and H3 (in vitro).

The protein localises to the nucleus. The catalysed reaction is ATP + H2O = ADP + phosphate + H(+). Its function is as follows. May be a transcriptional coactivator of the nuclear receptor ESR1 required to induce the expression of a subset of estradiol target genes, such as CCND1, MYC and E2F1. May play a role in the recruitment or occupancy of CREBBP at some ESR1 target gene promoters. May be required for histone hyperacetylation. The protein is ATPase family AAA domain-containing protein 2 (ATAD2) of Pongo abelii (Sumatran orangutan).